A 393-amino-acid chain; its full sequence is NAD(P)H-quinone oxidoreductase subunit H, chloroplastic (393 aa).

This sequence belongs to the complex I 49 kDa subunit family. NDH is composed of at least 16 different subunits, 5 of which are encoded in the nucleus.

It is found in the plastid. The protein resides in the chloroplast thylakoid membrane. It carries out the reaction a plastoquinone + NADH + (n+1) H(+)(in) = a plastoquinol + NAD(+) + n H(+)(out). The catalysed reaction is a plastoquinone + NADPH + (n+1) H(+)(in) = a plastoquinol + NADP(+) + n H(+)(out). Functionally, NDH shuttles electrons from NAD(P)H:plastoquinone, via FMN and iron-sulfur (Fe-S) centers, to quinones in the photosynthetic chain and possibly in a chloroplast respiratory chain. The immediate electron acceptor for the enzyme in this species is believed to be plastoquinone. Couples the redox reaction to proton translocation, and thus conserves the redox energy in a proton gradient. This chain is NAD(P)H-quinone oxidoreductase subunit H, chloroplastic, found in Ceratophyllum demersum (Rigid hornwort).